A 394-amino-acid chain; its full sequence is Elongation factor Tu (394 aa).

In terms of domain architecture, tr-type G spans Lys10–Glu205. The segment at Gly19–Thr26 is G1. Gly19–Thr26 is a binding site for GTP. Thr26 lines the Mg(2+) pocket. The G2 stretch occupies residues Gly61 to Asn65. The segment at Asp82–Gly85 is G3. GTP-binding positions include Asp82–His86 and Asn137–Asp140. Positions Asn137–Asp140 are G4. Residues Ser173–Phe175 form a G5 region.

Belongs to the TRAFAC class translation factor GTPase superfamily. Classic translation factor GTPase family. EF-Tu/EF-1A subfamily. In terms of assembly, monomer.

The protein localises to the cytoplasm. The catalysed reaction is GTP + H2O = GDP + phosphate + H(+). Its function is as follows. GTP hydrolase that promotes the GTP-dependent binding of aminoacyl-tRNA to the A-site of ribosomes during protein biosynthesis. This Borrelia hermsii (strain HS1 / DAH) protein is Elongation factor Tu.